We begin with the raw amino-acid sequence, 379 residues long: Probable G-protein coupled receptor 27 (379 aa).

Over 1-26 (MANASEPGGGGSGGGAEAAALGLRLA) the chain is Extracellular. Asn3 carries N-linked (GlcNAc...) asparagine glycosylation. Residues 27 to 47 (TLSLLLCVSLAGNVLFALLIV) form a helical membrane-spanning segment. At 48–58 (RERSLHRAPYY) the chain is on the cytoplasmic side. A helical transmembrane segment spans residues 59–79 (LLLDLCLADGLRALACLPAVM). At 80–100 (LAARRAAAAAGTPPGALGCKL) the chain is on the extracellular side. Cys98 and Cys175 are oxidised to a cystine. The helical transmembrane segment at 101–121 (LAFLAALFCFHAAFLLLGVGV) threads the bilayer. Residues 122–142 (TRYLAIAHHRFYAERLAGWPC) are Cytoplasmic-facing. Residues 143–163 (AAMLVCAAWALALAAAFPPVL) form a helical membrane-spanning segment. Residues 164-185 (DGGGADDEDAPCALEQRPDGAP) lie on the Extracellular side of the membrane. Residues 186-206 (GALGFLLLLAAVVGATHLVYL) form a helical membrane-spanning segment. Residues 207-289 (RLLFFIHDRR…FKTEKRLCKM (83 aa)) are Cytoplasmic-facing. The helical transmembrane segment at 290–310 (FYAITLLFLLLWGPYVVASYL) threads the bilayer. Over 311 to 324 (RVLVRPGAVPQAYL) the chain is Extracellular. A helical membrane pass occupies residues 325-345 (TASVWLTFAQAGINPVVCFLF). Residues 346–379 (NRELRDCFRAQFPCCQSPQATQATLPCDLKGIGL) lie on the Cytoplasmic side of the membrane.

Belongs to the G-protein coupled receptor 1 family.

The protein localises to the cell membrane. In terms of biological role, orphan receptor. Possible candidate for amine-like G-protein coupled receptor. This is Probable G-protein coupled receptor 27 (Gpr27) from Mus musculus (Mouse).